Here is a 475-residue protein sequence, read N- to C-terminus: Glycogen synthase (475 aa).

Lysine 15 contributes to the ADP-alpha-D-glucose binding site.

This sequence belongs to the glycosyltransferase 1 family. Bacterial/plant glycogen synthase subfamily.

The enzyme catalyses [(1-&gt;4)-alpha-D-glucosyl](n) + ADP-alpha-D-glucose = [(1-&gt;4)-alpha-D-glucosyl](n+1) + ADP + H(+). Its pathway is glycan biosynthesis; glycogen biosynthesis. Its function is as follows. Synthesizes alpha-1,4-glucan chains using ADP-glucose. The protein is Glycogen synthase of Alkaliphilus metalliredigens (strain QYMF).